Consider the following 171-residue polypeptide: 3-hydroxydecanoyl-[acyl-carrier-protein] dehydratase (171 aa).

Residue His-70 is part of the active site.

The protein belongs to the thioester dehydratase family. FabA subfamily. In terms of assembly, homodimer.

Its subcellular location is the cytoplasm. It carries out the reaction a (3R)-hydroxyacyl-[ACP] = a (2E)-enoyl-[ACP] + H2O. The enzyme catalyses (3R)-hydroxydecanoyl-[ACP] = (2E)-decenoyl-[ACP] + H2O. The catalysed reaction is (2E)-decenoyl-[ACP] = (3Z)-decenoyl-[ACP]. The protein operates within lipid metabolism; fatty acid biosynthesis. Its function is as follows. Necessary for the introduction of cis unsaturation into fatty acids. Catalyzes the dehydration of (3R)-3-hydroxydecanoyl-ACP to E-(2)-decenoyl-ACP and then its isomerization to Z-(3)-decenoyl-ACP. Can catalyze the dehydratase reaction for beta-hydroxyacyl-ACPs with saturated chain lengths up to 16:0, being most active on intermediate chain length. This Pseudomonas syringae pv. tomato (strain ATCC BAA-871 / DC3000) protein is 3-hydroxydecanoyl-[acyl-carrier-protein] dehydratase.